Here is a 323-residue protein sequence, read N- to C-terminus: Phosphatidylethanolamine:ceramide ethanolaminephosphotransferase (323 aa).

The Cytoplasmic portion of the chain corresponds to 1–26; that stretch reads MAVPPVEMYSGSFWNRMRKPLPLRTQ. The chain crosses the membrane as a helical span at residues 27-47; that stretch reads VIRFTVVFVIVSFILVVALQI. Over 48 to 74 the chain is Extracellular; it reads THERMPDPKVTKPLPDLGFELLTKVPG. Residues 75–95 form a helical membrane-spanning segment; the sequence is MYVLADCCIGFLNILSVFTAF. Residues 96–147 are Cytoplasmic-facing; that stretch reads KLYLLHRHCVGSGEPELPCNIPGVSRFFLSVWLCKENCRIELRNIHTIAWIR. Residues 148–168 traverse the membrane as a helical segment; that stretch reads FITSYALLLLSRSIIMVVTSL. At 169–187 the chain is on the extracellular side; sequence PNPDDLCQNPPKIENRVKD. The chain crosses the membrane as a helical span at residues 188-208; the sequence is ILLTVLTAGAGSIHCGDLMYS. Residues 209 to 233 lie on the Cytoplasmic side of the membrane; the sequence is GHTVILTLHLMFHWIYGAMVHWSFR. A helical membrane pass occupies residues 234-254; it reads PVVTVVAIFGYYCIVASRFHY. Over 255-257 the chain is Extracellular; that stretch reads TDD. A helical membrane pass occupies residues 258–278; the sequence is VLVAIYLTIATFIAVGHNADG. Topologically, residues 279-323 are cytoplasmic; sequence APWQLQLFIRWWPCCGANSREVAEDGVPVAIVIKNEEMMNFEGKS.

Belongs to the sphingomyelin synthase family.

The protein resides in the membrane. It carries out the reaction an N-acylsphing-4-enine + a 1,2-diacyl-sn-glycero-3-phosphoethanolamine = an N-acylsphing-4-enine 1-phosphoethanolamine + a 1,2-diacyl-sn-glycerol. The catalysed reaction is an N-acylsphinganine + a 1,2-diacyl-sn-glycero-3-phosphoethanolamine = an N-acylsphinganine-1-phosphoethanolamine + a 1,2-diacyl-sn-glycerol. In terms of biological role, predominantly synthesizes ethanolamine-phosphorylceramide (EPC), with minimal sphingomyelin (SM)/inositol phosphorylceramide (IPC) synthase activity. Specificity is likely to be defined by residues in the lumenal catalytic domain that interact with the polar head groups of the phospholipid donors. EPC is synthesized by both stages of the parasite life cycle, bloodstream forms (BSF) and procyclic forms (PCF), by transferring the phosphoethanolamine from a 1,2-diacyl-sn-glycero-3-phosphoethanolamine to an N-acylsphing-4-enine (ceramide) or an N-acylsphinganine (dihydroceramide). Similarly, SM is synthesized by transferring the phosphocholine from a 1,2-diacyl-sn-glycero-3-phosphocholine to ceramide or dihydroceramide by BSF and PCF, while IPC is confined to PCF. The ceramide/dihydroceramide ratios are skewed towards dihydroceramide in PCF parasites and ceramide in BSF parasites, this is likely due to differential expression and/or regulation of dihydroceramide desaturase, the enzyme responsible for converting dihydroceramide to ceramide. The polypeptide is Phosphatidylethanolamine:ceramide ethanolaminephosphotransferase (Trypanosoma brucei brucei).